The chain runs to 91 residues: HssA/B-like protein 52 (91 aa).

Disordered stretches follow at residues Met1–Ser20 and Gly72–Ile91.

The protein belongs to the hssA/B family.

This Dictyostelium discoideum (Social amoeba) protein is HssA/B-like protein 52 (hssl52).